The following is a 352-amino-acid chain: Protein RecA (352 aa).

65–72 (GPESSGKT) is a binding site for ATP.

This sequence belongs to the RecA family.

It localises to the cytoplasm. Its function is as follows. Can catalyze the hydrolysis of ATP in the presence of single-stranded DNA, the ATP-dependent uptake of single-stranded DNA by duplex DNA, and the ATP-dependent hybridization of homologous single-stranded DNAs. It interacts with LexA causing its activation and leading to its autocatalytic cleavage. This is Protein RecA from Pseudomonas fluorescens (strain Pf0-1).